The sequence spans 164 residues: UPF0304 protein Ent638_2838 (164 aa).

Belongs to the UPF0304 family.

This chain is UPF0304 protein Ent638_2838, found in Enterobacter sp. (strain 638).